The sequence spans 126 residues: Fluoride-specific ion channel FluC (126 aa).

4 helical membrane passes run 4-24 (PLLSIALGSVLGAWLRWFLGL), 33-53 (IPLGTVTVNLVGGFIIGFAMA), 67-87 (FVITGFCGALTTFSTFSIEIV), and 97-117 (MAMLAISIHLIGSLIFTCLGL). 2 residues coordinate Na(+): Gly74 and Thr77.

Belongs to the fluoride channel Fluc/FEX (TC 1.A.43) family.

It localises to the cell inner membrane. The catalysed reaction is fluoride(in) = fluoride(out). Na(+) is not transported, but it plays an essential structural role and its presence is essential for fluoride channel function. Functionally, fluoride-specific ion channel. Important for reducing fluoride concentration in the cell, thus reducing its toxicity. This Acinetobacter baumannii (strain AB307-0294) protein is Fluoride-specific ion channel FluC.